A 206-amino-acid polypeptide reads, in one-letter code: uncharacterized protein (206 aa).

The signal sequence occupies residues 1 to 18; sequence MKTYSLLLGLFISFGVLA.

This is an uncharacterized protein from Haemophilus influenzae (strain ATCC 51907 / DSM 11121 / KW20 / Rd).